Here is a 299-residue protein sequence, read N- to C-terminus: Protease HtpX homolog (299 aa).

Transmembrane regions (helical) follow at residues 15–35 (ILLLVFFLLLALVGYAVGYLF) and 39–59 (GLGGLVIALIIGFIYALSMIF). Residue H143 coordinates Zn(2+). Residue E144 is part of the active site. A Zn(2+)-binding site is contributed by H147. 2 helical membrane passes run 158-178 (IAVALASAITMLSGMAGRMMW) and 198-218 (IIMLVVSLLAIVLAPLAATLV). E227 provides a ligand contact to Zn(2+).

It belongs to the peptidase M48B family. The cofactor is Zn(2+).

The protein localises to the cell membrane. This Streptococcus pneumoniae (strain P1031) protein is Protease HtpX homolog.